A 114-amino-acid polypeptide reads, in one-letter code: FK506-binding protein 1 (114 aa).

In terms of domain architecture, PPIase FKBP-type spans 26-114; that stretch reads GDLVTIHYTG…VFDVELLKIN (89 aa).

This sequence belongs to the FKBP-type PPIase family. FKBP1 subfamily.

The protein resides in the cytoplasm. It catalyses the reaction [protein]-peptidylproline (omega=180) = [protein]-peptidylproline (omega=0). Inhibited by both FK506 and rapamycin. In terms of biological role, PPIases accelerate the folding of proteins. It catalyzes the cis-trans isomerization of proline imidic peptide bonds in oligopeptides. The polypeptide is FK506-binding protein 1 (FPR1) (Kluyveromyces lactis (strain ATCC 8585 / CBS 2359 / DSM 70799 / NBRC 1267 / NRRL Y-1140 / WM37) (Yeast)).